The sequence spans 366 residues: Probable protein arginine N-methyltransferase 1.2 (366 aa).

In terms of domain architecture, SAM-dependent MTase PRMT-type spans 45–347; it reads ADYYFDSYSH…NPRDVDIKLS (303 aa). Active-site residues include Glu157 and Glu166.

The protein belongs to the class I-like SAM-binding methyltransferase superfamily. Protein arginine N-methyltransferase family. Interacts with FIB2 and PRMT11.

The protein localises to the nucleus. Its subcellular location is the cytoplasm. Methylates (mono and asymmetric dimethylation) the guanidino nitrogens of arginyl residues present in a glycine and arginine-rich domain. Type I arginine methyltransferase active on both histones and non-histone proteins. Mediates the methylation of MED36A. The protein is Probable protein arginine N-methyltransferase 1.2 (PRMT12) of Arabidopsis thaliana (Mouse-ear cress).